The following is a 473-amino-acid chain: ATP synthase subunit beta (473 aa).

158-165 (GGAGVGKT) is a binding site for ATP.

Belongs to the ATPase alpha/beta chains family. In terms of assembly, F-type ATPases have 2 components, CF(1) - the catalytic core - and CF(0) - the membrane proton channel. CF(1) has five subunits: alpha(3), beta(3), gamma(1), delta(1), epsilon(1). CF(0) has three main subunits: a(1), b(2) and c(9-12). The alpha and beta chains form an alternating ring which encloses part of the gamma chain. CF(1) is attached to CF(0) by a central stalk formed by the gamma and epsilon chains, while a peripheral stalk is formed by the delta and b chains.

The protein localises to the cell membrane. It carries out the reaction ATP + H2O + 4 H(+)(in) = ADP + phosphate + 5 H(+)(out). In terms of biological role, produces ATP from ADP in the presence of a proton gradient across the membrane. The catalytic sites are hosted primarily by the beta subunits. This Geobacillus thermoleovorans (Bacillus thermoleovorans) protein is ATP synthase subunit beta.